The chain runs to 612 residues: FAD-linked oxidoreductase notD' (612 aa).

The signal sequence occupies residues 1 to 19 (MRDIRELLLVLFTSCLALG). N-linked (GlcNAc...) asparagine glycans are attached at residues Asn50, Asn86, and Asn109. One can recognise an FAD-binding PCMH-type domain in the interval 124-307 (GQGRIPRYSA…TSITMPVFGA (184 aa)). N-linked (GlcNAc...) asparagine glycosylation is found at Asn311 and Asn396.

The protein belongs to the oxygen-dependent FAD-linked oxidoreductase family. FAD is required as a cofactor.

It participates in alkaloid biosynthesis. In terms of biological role, FAD-linked oxidoreductase; part of the gene cluster that mediates the biosynthesis of notoamide, a fungal indole alkaloid that belongs to a family of natural products containing a characteristic bicyclo[2.2.2]diazaoctane core. The first step of notoamide biosynthesis involves coupling of L-proline and L-tryptophan by the bimodular NRPS notE', to produce cyclo-L-tryptophan-L-proline called brevianamide F. The reverse prenyltransferase notF' then acts as a deoxybrevianamide E synthase and converts brevianamide F to deoxybrevianamide E via reverse prenylation at C-2 of the indole ring leading to the bicyclo[2.2.2]diazaoctane core. Deoxybrevianamide E is further hydroxylated at C-6 of the indole ring, likely catalyzed by the cytochrome P450 monooxygenase notG', to yield 6-hydroxy-deoxybrevianamide E. 6-hydroxy-deoxybrevianamide E is a specific substrate of the prenyltransferase notC' for normal prenylation at C-7 to produce 6-hydroxy-7-prenyl-deoxybrevianamide, also called notoamide S. As the proposed pivotal branching point in notoamide biosynthesis, notoamide S can be diverted to notoamide E through an oxidative pyran ring closure putatively catalyzed by either notH' cytochrome P450 monooxygenase or the notD' FAD-linked oxidoreductase. This step would be followed by an indole 2,3-epoxidation-initiated pinacol-like rearrangement catalyzed by the notB' FAD-dependent monooxygenase leading to the formation of notoamide C and notoamide D. On the other hand notoamide S is converted to notoamide T by notH' (or notD'), a bifunctional oxidase that also functions as the intramolecular Diels-Alderase responsible for generation of (-)-notoamide T. To generate antipodal (+)-notoaminide T, notH (or notD) in Aspergillus strain MF297-2 is expected to catalyze a Diels-Alder reaction leading to the opposite stereochemistry. The remaining oxidoreductase notD' (or notH') likely catalyzes the oxidative pyran ring formation to yield (-)-stephacidin A. The FAD-dependent monooxygenase notI' is highly similar to notB' and is predicted to catalyze a similar conversion from (-)-stephacidin A to (+)-notoamide B via the 2,3-epoxidation of (-)-stephacidin A followed by a pinacol-type rearrangement. Finally, it remains unclear which enzyme could be responsible for the final hydroxylation steps leading to notoamide A and sclerotiamide. This is FAD-linked oxidoreductase notD' from Aspergillus versicolor.